A 284-amino-acid chain; its full sequence is UTP--glucose-1-phosphate uridylyltransferase (284 aa).

This sequence belongs to the UDPGP type 2 family.

It catalyses the reaction alpha-D-glucose 1-phosphate + UTP + H(+) = UDP-alpha-D-glucose + diphosphate. In Komagataeibacter xylinus (Gluconacetobacter xylinus), this protein is UTP--glucose-1-phosphate uridylyltransferase (celA).